The chain runs to 318 residues: Glutathione synthetase (318 aa).

The ATP-grasp domain maps to 129–314; it reads KLAITEFPDL…VPEMFAVALE (186 aa). 155–211 contacts ATP; that stretch reads HAAQGDVIVKPLDDMGGTGIFRLQRSEPNLNAILETLTDNGTRTIMAQRYIPEIVKG. Mg(2+) contacts are provided by glutamate 285 and asparagine 287.

Belongs to the prokaryotic GSH synthase family. The cofactor is Mg(2+). It depends on Mn(2+) as a cofactor.

The enzyme catalyses gamma-L-glutamyl-L-cysteine + glycine + ATP = glutathione + ADP + phosphate + H(+). The protein operates within sulfur metabolism; glutathione biosynthesis; glutathione from L-cysteine and L-glutamate: step 2/2. The polypeptide is Glutathione synthetase (Bordetella pertussis (strain Tohama I / ATCC BAA-589 / NCTC 13251)).